A 754-amino-acid polypeptide reads, in one-letter code: DNA repair protein RAD4 (754 aa).

The tract at residues 23-51 (EKAPLSRRRRVRRKNQPLPDAKKKFKTGL) is disordered. Residues 27-37 (LSRRRRVRRKN) show a composition bias toward basic residues. A DNA-binding region spans residues 250 to 269 (DFLRAVSKGHGDPDISVQGF). The interval 701–754 (IANHEARPYSEPSEPEDSLDYVSVDKAEESATDDDVGEDYSDFMKELEMSEESD) is disordered. Residues 730-741 (SATDDDVGEDYS) are compositionally biased toward acidic residues.

It belongs to the XPC family.

The protein localises to the cytoplasm. Its subcellular location is the nucleus. Its function is as follows. Involved in nucleotide excision repair of DNA damaged with UV light, bulky adducts, or cross-linking agents. This Saccharomyces cerevisiae (strain ATCC 204508 / S288c) (Baker's yeast) protein is DNA repair protein RAD4 (RAD4).